The primary structure comprises 549 residues: Probable protein kinase UbiB (549 aa).

One can recognise a Protein kinase domain in the interval 123–501 (NFDDTPLASA…QQKAHKSNYL (379 aa)). ATP-binding positions include 129–137 (LASASISQV) and K152. D287 functions as the Proton acceptor in the catalytic mechanism. Helical transmembrane passes span 498–518 (SNYL…LFSQ) and 520–540 (ATLW…LLGW).

The protein belongs to the ABC1 family. UbiB subfamily.

Its subcellular location is the cell inner membrane. It participates in cofactor biosynthesis; ubiquinone biosynthesis [regulation]. Functionally, is probably a protein kinase regulator of UbiI activity which is involved in aerobic coenzyme Q (ubiquinone) biosynthesis. In Shewanella loihica (strain ATCC BAA-1088 / PV-4), this protein is Probable protein kinase UbiB.